A 202-amino-acid polypeptide reads, in one-letter code: Na(+)-translocating NADH-quinone reductase subunit E (202 aa).

The next 6 membrane-spanning stretches (helical) occupy residues 11 to 31 (AVFV…FIAI), 35 to 55 (VETA…TMPV), 79 to 99 (LSFL…QILE), 114 to 134 (GVFL…LFMV), 144 to 164 (TVYG…LAGI), and 180 to 200 (LGIT…FSGV).

This sequence belongs to the NqrDE/RnfAE family. As to quaternary structure, composed of six subunits; NqrA, NqrB, NqrC, NqrD, NqrE and NqrF.

The protein resides in the cell inner membrane. It carries out the reaction a ubiquinone + n Na(+)(in) + NADH + H(+) = a ubiquinol + n Na(+)(out) + NAD(+). Its function is as follows. NQR complex catalyzes the reduction of ubiquinone-1 to ubiquinol by two successive reactions, coupled with the transport of Na(+) ions from the cytoplasm to the periplasm. NqrA to NqrE are probably involved in the second step, the conversion of ubisemiquinone to ubiquinol. This chain is Na(+)-translocating NADH-quinone reductase subunit E, found in Ectopseudomonas mendocina (strain ymp) (Pseudomonas mendocina).